Here is a 484-residue protein sequence, read N- to C-terminus: Muscarinic acetylcholine receptor M4 (484 aa).

Over 1–32 (MENDTWENESSASNHSIDETIVEIPGKYQTME) the chain is Extracellular. N-linked (GlcNAc...) asparagine glycosylation is found at Asn-3, Asn-8, and Asn-14. Residues 33–55 (MIFIATVTGSLSLVTVVGNILVM) traverse the membrane as a helical segment. Residues 56–69 (LSIKVNRQLQTVNN) lie on the Cytoplasmic side of the membrane. The helical transmembrane segment at 70–90 (YFLFSLACADLIIGVFSMNLY) threads the bilayer. At 91–107 (SLYIIKGYWPLGPIVCD) the chain is on the extracellular side. An intrachain disulfide couples Cys-106 to Cys-186. Residues 108–129 (LWLALDYVVSNASVMNLLIISL) traverse the membrane as a helical segment. The Cytoplasmic segment spans residues 130-149 (ERXFCVTKPLTYPARRTTKM). A helical membrane pass occupies residues 150 to 172 (AGLMIAAAWLLSFELWAPAILFW). Over 173-194 (QFIVGQRTVPSGECYIQFLSNP) the chain is Extracellular. Residues 195 to 217 (AVTFGTAIAAFYLPVVIMTILYI) traverse the membrane as a helical segment. Residues 218–406 (HISLASRSRV…AAREKKVTRT (189 aa)) are Cytoplasmic-facing. Residues 255-316 (NIPKQDAGDK…EKQPLSEASS (62 aa)) form a disordered region. Positions 260 to 270 (DAGDKVVEKKN) are enriched in basic and acidic residues. A helical membrane pass occupies residues 407–427 (IFAILLAFIITWTPYNVMVLI). Residues 428 to 441 (NTFCQTCIPETIWY) are Extracellular-facing. The helical transmembrane segment at 442-461 (IGYWLCYVNSTINPACYALC) threads the bilayer. Residues 462 to 484 (NATFKKTFKHLLMCQYKSIGTAR) are Cytoplasmic-facing.

This sequence belongs to the G-protein coupled receptor 1 family. Muscarinic acetylcholine receptor subfamily. CHRM4 sub-subfamily.

It is found in the cell membrane. Its subcellular location is the postsynaptic cell membrane. Its function is as follows. The muscarinic acetylcholine receptor mediates various cellular responses, including inhibition of adenylate cyclase, breakdown of phosphoinositides and modulation of potassium channels through the action of G proteins. Primary transducing effect is inhibition of adenylate cyclase. The chain is Muscarinic acetylcholine receptor M4 (chrm4) from Xenopus laevis (African clawed frog).